A 251-amino-acid polypeptide reads, in one-letter code: uncharacterized protein (251 aa).

The signal sequence occupies residues 1–15 (MSAISSLVLIGWAMC). N-linked (GlcNAc...) asparagine glycans are attached at residues N225 and N242.

This is an uncharacterized protein from Encephalitozoon cuniculi (strain GB-M1) (Microsporidian parasite).